Consider the following 323-residue polypeptide: Fructose-1,6-bisphosphatase class 1 (323 aa).

Mg(2+) is bound by residues glutamate 93, aspartate 114, leucine 116, and aspartate 117. Substrate contacts are provided by residues 117 to 120 (DGSS), asparagine 205, tyrosine 233, and lysine 263. A Mg(2+)-binding site is contributed by glutamate 269.

It belongs to the FBPase class 1 family. As to quaternary structure, homotetramer. Mg(2+) is required as a cofactor.

Its subcellular location is the cytoplasm. It carries out the reaction beta-D-fructose 1,6-bisphosphate + H2O = beta-D-fructose 6-phosphate + phosphate. The protein operates within carbohydrate biosynthesis; gluconeogenesis. In Sulfurihydrogenibium sp. (strain YO3AOP1), this protein is Fructose-1,6-bisphosphatase class 1.